Here is a 605-residue protein sequence, read N- to C-terminus: Bifunctional purine biosynthesis protein ADE16 (605 aa).

The region spanning 1–147 (MSSEAPIALL…KNHGRVSIIS (147 aa)) is the MGS-like domain. IMP is bound by residues 35–38 (SGGT), 65–68 (RVKT), 102–103 (CN), and 126–127 (DI). K138 serves as the catalytic Proton donor/acceptor; for FAICAR cyclization activity. Residues 219–220 (RY), H279, G327, D350, N442, and R462 each bind 5-amino-1-(5-phospho-beta-D-ribosyl)imidazole-4-carboxamide. Residue H279 is the Proton acceptor; for AICAR formyltransferase activity of the active site. I463 contacts (6R)-10-formyltetrahydrofolate. F554 contributes to the 5-amino-1-(5-phospho-beta-D-ribosyl)imidazole-4-carboxamide binding site. Residue D559 coordinates (6R)-10-formyltetrahydrofolate. R601 serves as a coordination point for 5-amino-1-(5-phospho-beta-D-ribosyl)imidazole-4-carboxamide.

It belongs to the PurH family. As to quaternary structure, homodimer.

It localises to the cytoplasm. Its subcellular location is the cytosol. It catalyses the reaction (6R)-10-formyltetrahydrofolate + 5-amino-1-(5-phospho-beta-D-ribosyl)imidazole-4-carboxamide = 5-formamido-1-(5-phospho-D-ribosyl)imidazole-4-carboxamide + (6S)-5,6,7,8-tetrahydrofolate. It carries out the reaction IMP + H2O = 5-formamido-1-(5-phospho-D-ribosyl)imidazole-4-carboxamide. Its pathway is purine metabolism; IMP biosynthesis via de novo pathway; 5-formamido-1-(5-phospho-D-ribosyl)imidazole-4-carboxamide from 5-amino-1-(5-phospho-D-ribosyl)imidazole-4-carboxamide (10-formyl THF route): step 1/1. It functions in the pathway purine metabolism; IMP biosynthesis via de novo pathway; IMP from 5-formamido-1-(5-phospho-D-ribosyl)imidazole-4-carboxamide: step 1/1. Functionally, bifunctional enzyme that catalyzes the last two steps of purine biosynthesis. Acts as a transformylase that incorporates a formyl group to the AMP analog AICAR (5-amino-1-(5-phospho-beta-D-ribosyl)imidazole-4-carboxamide) to produce the intermediate formyl-AICAR (FAICAR). Also catalyzes the cyclization of FAICAR to IMP. This Cryptococcus neoformans var. grubii serotype A (strain H99 / ATCC 208821 / CBS 10515 / FGSC 9487) (Filobasidiella neoformans var. grubii) protein is Bifunctional purine biosynthesis protein ADE16.